The primary structure comprises 59 residues: ISEVKMDAEFRHDSGYEVHHQKLVFFAEDVGSNKGAIIGLMVGGVVIATVIVITLVMLK.

Over Ile1–Lys34 the chain is Extracellular. Residues Gly35–Leu58 traverse the membrane as a helical segment. Residue Lys59 is a topological domain, cytoplasmic.

The protein belongs to the APP family. In terms of assembly, binds, via its C-terminus, to the PID domain of several cytoplasmic proteins, including APBB family members, the APBA family, MAPK8IP1, SHC1 and NUMB and DAB1. Binding to DAB1 inhibits its serine phosphorylation. Interacts (via NPXY motif) with DAB2 (via PID domain); the interaction is impaired by tyrosine phosphorylation of the NPXY motif. Also interacts with GPCR-like protein BPP, APPBP1, IB1, KNS2 (via its TPR domains), APPBP2 (via BaSS) and DDB1. In vitro, it binds MAPT via the MT-binding domains. Associates with microtubules in the presence of ATP and in a kinesin-dependent manner. Interacts, through a C-terminal domain, with GNAO1. Interacts with CPEB1, ANKS1B and AGER. Interacts with ITM2B. Interacts with ITM2C. Interacts with IDE. Can form homodimers; dimerization is enhanced in the presence of Cu(2+) ions. Can form homodimers; this is promoted by heparin binding. Interacts with SORL1 (via N-terminal ectodomain); this interaction retains APP in the trans-Golgi network and reduces processing into soluble APP-alpha and amyloid-beta peptides. Interacts with PLD3. Interacts with VDAC1. Interacts with NSG1; could regulate APP processing. Amyloid-beta protein 42 interacts with FPR2. Interacts with LRRK2. Interacts (via cytoplasmic domain) with KIF5B. Interacts (via C-terminus) with APBB2/FE65L1 (via C-terminus). Interacts (via intracellular domain) with APBB3. Post-translationally, proteolytically processed under normal cellular conditions. Cleavage either by alpha-secretase, beta-secretase or theta-secretase leads to generation and extracellular release of soluble APP peptides, S-APP-alpha and S-APP-beta, and the retention of corresponding membrane-anchored C-terminal fragments, C80, C83 and C99. Subsequent processing of C80 and C83 by gamma-secretase yields P3 peptides. This is the major secretory pathway and is non-amyloidogenic. Alternatively, presenilin/nicastrin-mediated gamma-secretase processing of C99 releases the amyloid-beta proteins, amyloid-beta protein 40 and amyloid-beta protein 42, major components of amyloid plaques, and the cytotoxic C-terminal fragments, gamma-CTF(50), gamma-CTF(57) and gamma-CTF(59). PSEN1 cleavage is more efficient with C83 than with C99 as substrate (in vitro). Amyloid-beta protein 40 and Amyloid-beta protein 42 are cleaved by ACE. Many other minor amyloid-beta peptides, amyloid-beta 1-X peptides, are found in cerebral spinal fluid (CSF) including the amyloid-beta X-15 peptides, produced from the cleavage by alpha-secretase.

The protein localises to the cell membrane. It is found in the membrane. Its subcellular location is the perikaryon. It localises to the cell projection. The protein resides in the growth cone. The protein localises to the clathrin-coated pit. It is found in the early endosome. Its subcellular location is the cytoplasmic vesicle. It localises to the secreted. The protein resides in the cell surface. The protein localises to the nucleus. It is found in the cytoplasm. Functions as a cell surface receptor and performs physiological functions on the surface of neurons relevant to neurite growth, neuronal adhesion and axonogenesis. Interaction between APP molecules on neighboring cells promotes synaptogenesis. Involved in cell mobility and transcription regulation through protein-protein interactions. Can promote transcription activation through binding to APBB1-KAT5 and inhibit Notch signaling through interaction with Numb. Couples to apoptosis-inducing pathways such as those mediated by G(o) and JIP. Inhibits G(o)-alpha ATPase activity. Acts as a kinesin I membrane receptor, mediating the axonal transport of beta-secretase and presenilin 1. By acting as a kinesin I membrane receptor, plays a role in axonal anterograde transport of cargo towards synapses in axons. May be involved in copper homeostasis/oxidative stress through copper ion reduction. In vitro, copper-metallated APP induces neuronal death directly or is potentiated through Cu(2+)-mediated low-density lipoprotein oxidation. Can regulate neurite outgrowth through binding to components of the extracellular matrix such as heparin and collagen I and IV. Induces a AGER-dependent pathway that involves activation of p38 MAPK, resulting in internalization of amyloid-beta peptide and mitochondrial dysfunction in cultured cortical neurons. Provides Cu(2+) ions for GPC1 which are required for release of nitric oxide (NO) and subsequent degradation of the heparan sulfate chains on GPC1. This Bos taurus (Bovine) protein is Amyloid-beta precursor protein (APP).